Here is a 119-residue protein sequence, read N- to C-terminus: Ribonuclease P protein component (119 aa).

It belongs to the RnpA family. As to quaternary structure, consists of a catalytic RNA component (M1 or rnpB) and a protein subunit.

The enzyme catalyses Endonucleolytic cleavage of RNA, removing 5'-extranucleotides from tRNA precursor.. Its function is as follows. RNaseP catalyzes the removal of the 5'-leader sequence from pre-tRNA to produce the mature 5'-terminus. It can also cleave other RNA substrates such as 4.5S RNA. The protein component plays an auxiliary but essential role in vivo by binding to the 5'-leader sequence and broadening the substrate specificity of the ribozyme. This is Ribonuclease P protein component from Citrobacter koseri (strain ATCC BAA-895 / CDC 4225-83 / SGSC4696).